The following is a 520-amino-acid chain: Pleckstrin homology domain-containing family O member 1-A (520 aa).

Disordered regions lie at residues 1–23 (MKKSHLVKRGLQDANQPSSQPDK), 208–296 (SLDK…GHLQ), 313–439 (IQEQ…KSTD), and 497–520 (QARQRREELSKTGMASQKLQQKSP). The PH domain maps to 20 to 131 (QPDKVGWIRR…WINVLNTAIT (112 aa)). Positions 227–241 (PASNTEAQEKTSSLP) are enriched in polar residues. Basic and acidic residues-rich tracts occupy residues 242-255 (RKSEISWSQEDHPR) and 333-347 (DSPRLRHLKGSDSPH). Positions 348–361 (SKGSSSPHSANSPS) are enriched in low complexity. Basic and acidic residues-rich tracts occupy residues 363 to 385 (RAKDSPSSKSKESPHAKSKDSPR) and 396 to 418 (KSIDSPDSKESSSLHMKCIDLTH). The span at 420 to 439 (KGSQSPLSTGSNSPHMKSTD) shows a compositional bias: polar residues. The span at 497–506 (QARQRREELS) shows a compositional bias: basic and acidic residues. The segment covering 509–520 (GMASQKLQQKSP) has biased composition (polar residues).

In terms of processing, C-terminal fragments could be released during apoptosis via caspase-3-dependent cleavage.

The protein resides in the membrane. The protein localises to the nucleus. Its subcellular location is the cytoplasm. Plays a role in the regulation of the actin cytoskeleton through its interactions with actin capping protein (CP). The sequence is that of Pleckstrin homology domain-containing family O member 1-A (plekho1a) from Danio rerio (Zebrafish).